The sequence spans 273 residues: Terpene cyclase ascF (273 aa).

Transmembrane regions (helical) follow at residues 18 to 38, 49 to 69, 78 to 98, 113 to 133, 153 to 173, 178 to 198, and 217 to 237; these read VYEA…ILIA, MPLF…LWVV, MTIW…HGVL, ILVG…SWWI, YWAV…MLCV, GGVS…GLNM, and APAV…GFVL.

Belongs to the paxB family.

The protein localises to the membrane. It carries out the reaction ilicicolin A epoxide = ilicicolin C. It participates in secondary metabolite biosynthesis; terpenoid biosynthesis. Functionally, terpene cyclase; part of the asc-1 gene cluster that mediates the biosynthesis of both ascochlorin and ascofuranone, a strong inhibitor of cyanide-insensitive alternative oxidases and a promising drug candidate against African trypanosomiasis. The first step in the pathway is performed by the non-reducing polyketide synthase ascC that produces orsellinic acid by condensing acetyl-CoA with 3 malonyl-CoA units. Orsellinic acid is then prenylated by the prenyltransferase ascA to yield ilicicolinic acid B. Ilicicolinic acid B is further reduced to ilicicolin B by the reductase ascB. The halogenase ascD then chlorinates ilicicolin B to produce ilicicolin A which is converted to ilicicolin A epoxide by the cytochrome P450 monooxygenase ascE that catalyzes stereoselective epoxidation of the terminal double bond of the prenyl group. Ilicicolin A epoxide is the last common precursor for the biosynthesis of ascofuranone and ascochlorin. The terpene cyclase ascF produces a monocyclic terpene, and the cyclization reaction is proposed to be initiated by protonation of the terminal epoxide of ilicicolin A epoxide to generate a monocyclic tertiarycation, which is followed by a series of hydride and methyl shifts with abstraction of proton, leading to the formation of the (14S,15R,19R)-trimethylcyclohexanone ring structure of ilicicolin C, which is finally reduced to ascochlorin by the dehydrogenase ascG. On the other hand, ilicicolin A epoxide is hydroxylated by the cytochrome P450 monooxygenase ascH, and the resultant product is cyclized by the terpene cyclase ascI to ascofuranol via protonation-initiated epoxide ring opening, which facilitates the 6-endo-tet cyclization to form the tetrahy-drofuran ring. Finally, ascofuranol is oxidized into ascofuranone by ascJ. The sequence is that of Terpene cyclase ascF from Acremonium egyptiacum (Oospora egyptiaca).